Consider the following 275-residue polypeptide: NH(3)-dependent NAD(+) synthetase (275 aa).

47 to 54 (GISGGQDS) lines the ATP pocket. Residue Asp-53 participates in Mg(2+) binding. Arg-141 lines the deamido-NAD(+) pocket. ATP is bound at residue Thr-161. Glu-166 is a binding site for Mg(2+). Positions 174 and 181 each coordinate deamido-NAD(+). Residues Lys-190 and Thr-212 each coordinate ATP. Residue 261–262 (HK) participates in deamido-NAD(+) binding.

It belongs to the NAD synthetase family. Homodimer.

The catalysed reaction is deamido-NAD(+) + NH4(+) + ATP = AMP + diphosphate + NAD(+) + H(+). The protein operates within cofactor biosynthesis; NAD(+) biosynthesis; NAD(+) from deamido-NAD(+) (ammonia route): step 1/1. Functionally, catalyzes the ATP-dependent amidation of deamido-NAD to form NAD. Uses ammonia as a nitrogen source. In Lacticaseibacillus paracasei (strain ATCC 334 / BCRC 17002 / CCUG 31169 / CIP 107868 / KCTC 3260 / NRRL B-441) (Lactobacillus paracasei), this protein is NH(3)-dependent NAD(+) synthetase.